The sequence spans 101 residues: MAKKSAVNRNERVKKLVKQYAAKREALKAIANDESLPLEERFEARLKLAELPRNSAAVRIRNRCEVTGRPRAYYRKLKMSRVSLRELGSHGLIPGLVKSSW.

The protein belongs to the universal ribosomal protein uS14 family. As to quaternary structure, part of the 30S ribosomal subunit. Contacts proteins S3 and S10.

Functionally, binds 16S rRNA, required for the assembly of 30S particles and may also be responsible for determining the conformation of the 16S rRNA at the A site. This chain is Small ribosomal subunit protein uS14, found in Phenylobacterium zucineum (strain HLK1).